The chain runs to 148 residues: Large ribosomal subunit protein bL9 (148 aa).

The protein belongs to the bacterial ribosomal protein bL9 family.

In terms of biological role, binds to the 23S rRNA. This chain is Large ribosomal subunit protein bL9, found in Pseudomonas aeruginosa (strain LESB58).